Here is a 188-residue protein sequence, read N- to C-terminus: Protein GrpE 2 (188 aa).

This sequence belongs to the GrpE family. In terms of assembly, homodimer.

The protein localises to the cytoplasm. Its function is as follows. Participates actively in the response to hyperosmotic and heat shock by preventing the aggregation of stress-denatured proteins, in association with DnaK and GrpE. It is the nucleotide exchange factor for DnaK and may function as a thermosensor. Unfolded proteins bind initially to DnaJ; upon interaction with the DnaJ-bound protein, DnaK hydrolyzes its bound ATP, resulting in the formation of a stable complex. GrpE releases ADP from DnaK; ATP binding to DnaK triggers the release of the substrate protein, thus completing the reaction cycle. Several rounds of ATP-dependent interactions between DnaJ, DnaK and GrpE are required for fully efficient folding. The polypeptide is Protein GrpE 2 (Buchnera aphidicola subsp. Acyrthosiphon pisum (strain APS) (Acyrthosiphon pisum symbiotic bacterium)).